The following is a 358-amino-acid chain: Fructose-bisphosphate aldolase 6, cytosolic (358 aa).

Serine 2 carries the post-translational modification N-acetylserine. Residue arginine 39 coordinates substrate. Cysteine 68 is modified (S-glutathionyl cysteine; transient). An S-glutathionyl cysteine; transient; alternate modification is found at cysteine 173. Cysteine 173 is subject to S-nitrosocysteine; transient; alternate. The Proton acceptor role is filled by glutamate 183. Lysine 225 (schiff-base intermediate with dihydroxyacetone-P) is an active-site residue. Residues 266-268 (SGG) and arginine 298 each bind substrate. Serine 350 carries the phosphoserine modification. Lysine 354 carries the post-translational modification N6,N6,N6-trimethyllysine.

This sequence belongs to the class I fructose-bisphosphate aldolase family. As to quaternary structure, homotetramer. Interacts with TRX1 and TRX3. Interacts with GAPC1 and VDAC3. Post-translationally, S-glutathionylated at Cys-68 and Cys-173. S-nitrosylated at Cys-173. In terms of tissue distribution, expressed in roots, rosettes leaves, cauline leaves, stems and flowers.

It localises to the cytoplasm. The protein resides in the cytosol. The protein localises to the nucleus. Its subcellular location is the mitochondrion. It carries out the reaction beta-D-fructose 1,6-bisphosphate = D-glyceraldehyde 3-phosphate + dihydroxyacetone phosphate. It functions in the pathway carbohydrate degradation; glycolysis; D-glyceraldehyde 3-phosphate and glycerone phosphate from D-glucose: step 4/4. Total and irreversible inhibition by S-nitrosoglutathione (GSNO). Partial and reversible inhibition by oxidized glutathione (GSSG). Functionally, fructose-bisphosphate aldolase that plays a key role in glycolysis and gluconeogenesis. Associates with GAPC1 to the outer mitochondrial membrane, in a redox-dependent manner, leading to binding and bundling of actin. Actin binding and bundling occurs under oxidizing conditions and is reversible under reducing conditions. May be part of a redox-dependent retrograde signal transduction network for adaptation upon oxidative stress. The polypeptide is Fructose-bisphosphate aldolase 6, cytosolic (Arabidopsis thaliana (Mouse-ear cress)).